The chain runs to 532 residues: Pyruvate kinase (532 aa).

Arginine 63 lines the substrate pocket. K(+) is bound by residues asparagine 65, serine 67, aspartate 99, and threonine 100. 65–68 (NFSH) provides a ligand contact to ATP. Arginine 106 and lysine 191 together coordinate ATP. Position 256 (glutamate 256) interacts with Mg(2+). Substrate-binding residues include glycine 279, aspartate 280, and threonine 312. Aspartate 280 contributes to the Mg(2+) binding site.

It belongs to the pyruvate kinase family. As to quaternary structure, homotetramer. Mg(2+) is required as a cofactor. Requires K(+) as cofactor.

The catalysed reaction is pyruvate + ATP = phosphoenolpyruvate + ADP + H(+). Its pathway is carbohydrate degradation; glycolysis; pyruvate from D-glyceraldehyde 3-phosphate: step 5/5. This Agaricus bisporus (White button mushroom) protein is Pyruvate kinase (pkiA).